The following is a 51-amino-acid chain: Putative inactivation escape 1 protein (51 aa).

Highly expressed in pancreas, heart and liver followed by brain, placenta, lung, skeletal muscle and kidney. Mostly expressed in females.

The protein is Putative inactivation escape 1 protein (INE1) of Homo sapiens (Human).